We begin with the raw amino-acid sequence, 249 residues long: uncharacterized protein (249 aa).

It is found in the cytoplasm. It localises to the nucleus. The protein resides in the nucleolus. This is an uncharacterized protein from Schizosaccharomyces pombe (strain 972 / ATCC 24843) (Fission yeast).